Consider the following 776-residue polypeptide: MSINLTLDIYIYFLNNARSLCGKQRSKQLHFVCSKQYWRMNHVNVHREFHTSKKSCKWNRSEAHCSKHWHSPSNHGLHFGIVRLSTSAPKGLTKVSIHMSRIKSTLNSVSKAIFGSQNEMVTRLAQFKPSSRILRKVSDKGWLKQKNVKQAVESLKNYSDKSAGKNSLAEQKSYFADKEEDSGKHSLFHYTYGITTRFGESFSVLANHINSYFKSKGKMSQTKEDKQLQDKPDLEERKSSSPGPDTVADRPDSESPLEVKDKLSSPTQMPEAHPVSAKQSIANFLSRPTEGVQALVGGYIGGLVPKLKSDPKSPPEEQEVSAKTEQAVNKDKKAEEKKRVLLQQEKIIARVSIDNRTRALVQALRRTADPKLCITRVEELTFHLLEFPEGKGVAIKEKIIPYLLRLRQVKDETLQAAVREILALIGYVDPVKGRGIRILTIDGGGTRGVVALQTLRKLVELTQKPIHQLFDYICGVSTGAILAFMLGLFHMPLDECEELYRKLGSDVFTQNVIVGTVKMSWSHAFYDSNTWEKILKDRIGSALMIETARNPACPKVAAISTIVNRGQTPKAFVFRNYGHFPGTNSHYLGGCQYKMWQAIRASSAAPGYFAEYALGSDLHQDGGLLLNNPSALALHECKCIWPDTPLECIVSLGTGRYESDVRNTSTYTSLKTKLSNVISSATDTEEVHIMLDGLLPSDTYFRFNPVICENIPLDESRDEKLDQLQLEGMKYIERNDQKMKKVAKILSQEKTTLQKINDWIKLKSDMYEGLPFFSKL.

Residues N4 and N157 are each glycosylated (N-linked (GlcNAc...) asparagine). Disordered stretches follow at residues 216 to 276 (KGKM…HPVS) and 306 to 334 (KLKS…DKKA). Composition is skewed to basic and acidic residues over residues 221–239 (QTKE…ERKS) and 247–263 (VADR…KDKL). A PNPLA domain is found at 439–634 (LTIDGGGTRG…LLNNPSALAL (196 aa)). Positions 443-448 (GGGTRG) match the GXGXXG motif. A helical transmembrane segment spans residues 469–489 (LFDYICGVSTGAILAFMLGLF). The GXSXG signature appears at 475–479 (GVSTG). S477 (nucleophile) is an active-site residue. D621 serves as the catalytic Proton acceptor. Positions 621–623 (DGG) match the DGA/G motif. An N6-succinyllysine modification is found at K730.

Expressed in myocardium (at protein level).

It is found in the endoplasmic reticulum membrane. The protein resides in the mitochondrion membrane. Its subcellular location is the peroxisome membrane. The catalysed reaction is a 1,2-diacyl-sn-glycero-3-phosphocholine + H2O = a 1-acyl-sn-glycero-3-phosphocholine + a fatty acid + H(+). It catalyses the reaction a 1,2-diacyl-sn-glycero-3-phosphocholine + H2O = a 2-acyl-sn-glycero-3-phosphocholine + a fatty acid + H(+). It carries out the reaction a 1,2-diacyl-sn-glycero-3-phosphoethanolamine + H2O = a 1-acyl-sn-glycero-3-phosphoethanolamine + a fatty acid + H(+). The enzyme catalyses a 1-O-(1Z-alkenyl)-2-acyl-sn-glycero-3-phosphocholine + H2O = a 1-O-(1Z-alkenyl)-sn-glycero-3-phosphocholine + a fatty acid + H(+). The catalysed reaction is a 1-acyl-sn-glycero-3-phosphocholine + H2O = sn-glycerol 3-phosphocholine + a fatty acid + H(+). It catalyses the reaction 1-hexadecanoyl-2-(5Z,8Z,11Z,14Z-eicosatetraenoyl)-sn-glycero-3-phosphocholine + H2O = 2-(5Z,8Z,11Z,14Z)-eicosatetraenoyl-sn-glycero-3-phosphocholine + hexadecanoate + H(+). It carries out the reaction 1-acyl-2-(9Z,12Z)-octadecadienoyl-sn-glycero-3-phosphocholine + H2O = a 1-acyl-sn-glycero-3-phosphocholine + (9Z,12Z)-octadecadienoate + H(+). The enzyme catalyses 1-acyl-2-(5Z,8Z,11Z,14Z-eicosatetraenoyl)-sn-glycero-3-phosphocholine + H2O = a 1-acyl-sn-glycero-3-phosphocholine + (5Z,8Z,11Z,14Z)-eicosatetraenoate + H(+). The catalysed reaction is 1-hexadecanoyl-2-(5Z,8Z,11Z,14Z-eicosatetraenoyl)-sn-glycero-3-phosphocholine + H2O = 1-hexadecanoyl-sn-glycero-3-phosphocholine + (5Z,8Z,11Z,14Z)-eicosatetraenoate + H(+). It catalyses the reaction 1-octadecanoyl-2-(9Z-octadecenoyl)-sn-glycero-3-phosphocholine + H2O = 1-octadecanoyl-sn-glycero-3-phosphocholine + (9Z)-octadecenoate + H(+). It carries out the reaction 1-hexadecanoyl-2-(9Z-octadecenoyl)-sn-glycero-3-phosphocholine + H2O = 1-hexadecanoyl-sn-glycero-3-phosphocholine + (9Z)-octadecenoate + H(+). The enzyme catalyses 1-hexadecanoyl-2-(9Z,12Z-octadecadienoyl)-sn-glycero-3-phosphocholine + H2O = (9Z,12Z)-octadecadienoate + 1-hexadecanoyl-sn-glycero-3-phosphocholine + H(+). The catalysed reaction is 1-acyl-2-(9Z,12Z)-octadecadienoyl-sn-glycero-3-phosphoethanolamine + H2O = a 1-acyl-sn-glycero-3-phosphoethanolamine + (9Z,12Z)-octadecadienoate + H(+). It catalyses the reaction 1-acyl-2-(5Z,8Z,11Z,14Z)-eicosatetraenoyl-sn-glycero-3-phosphoethanolamine + H2O = a 1-acyl-sn-glycero-3-phosphoethanolamine + (5Z,8Z,11Z,14Z)-eicosatetraenoate + H(+). It carries out the reaction 1-hexadecanoyl-2-(5Z,8Z,11Z,14Z-eicosatetraenoyl)-sn-glycero-3-phosphoethanolamine + H2O = 1-hexadecanoyl-sn-glycero-3-phosphoethanolamine + (5Z,8Z,11Z,14Z)-eicosatetraenoate + H(+). The enzyme catalyses 1-octadecanoyl-2-(9Z-octadecenoyl)-sn-glycero-3-phosphocholine + H2O = 2-(9Z-octadecenoyl)-sn-glycero-3-phosphocholine + octadecanoate + H(+). The catalysed reaction is 1-hexadecanoyl-2-(4Z,7Z,10Z,13Z,16Z,19Z-docosahexaenoyl)-sn-glycero-3-phosphocholine + H2O = 2-(4Z,7Z,10Z,13Z,16Z,19Z-docosahexaenoyl)-sn-glycero-3-phosphocholine + hexadecanoate + H(+). It catalyses the reaction 1-O-(1Z)-hexadecenyl-2 (5Z,8Z,11Z,14Z)-eicosatetraenoyl-sn-glycero-3-phosphocholine + H2O = 1-(1Z-hexadecenyl)-sn-glycero-3-phosphocholine + (5Z,8Z,11Z,14Z)-eicosatetraenoate + H(+). It carries out the reaction 1-O-(1Z-hexadecenyl)-2-(9Z-octadecenoyl)-sn-glycero-3-phosphocholine + H2O = 1-(1Z-hexadecenyl)-sn-glycero-3-phosphocholine + (9Z)-octadecenoate + H(+). The enzyme catalyses 1-hexadecanoyl-sn-glycero-3-phosphocholine + H2O = sn-glycerol 3-phosphocholine + hexadecanoate + H(+). The catalysed reaction is 1',3'-bis-[1,2-di-(9Z,12Z-octadecadienoyl)-sn-glycero-3-phospho]-glycerol + H2O = 1'-[1,2-di-(9Z,12Z-octadecadienoyl)-sn-glycero-3-phospho]-3'-[1-(9Z,12Z-octadecadienoyl)-sn-glycero-3-phospho]-glycerol + (9Z,12Z)-octadecadienoate + H(+). It catalyses the reaction 1'-[1-acyl-2-(9-hydroxy-(10E,12Z)-octadecadienoyl)-sn-glycero-3-phospho]-3'-[1,2-diacyl-sn-glycero-3-phospho]-glycerol + H2O = 9-hydroxy-(10E,12Z)-octadecadienoate + 1'-[1,2-diacyl-sn-glycero-3-phospho],3'-[1-acyl-sn-glycero-3-phospho]-glycerol + H(+). The protein operates within phospholipid metabolism. With respect to regulation, calcium-independent phospholipase. Calcium-independent and membrane-bound phospholipase, that catalyzes the esterolytic cleavage of fatty acids from glycerophospholipids to yield free fatty acids and lysophospholipids, hence regulating membrane physical properties and the release of lipid second messengers and growth factors. Hydrolyzes phosphatidylethanolamine, phosphatidylcholine and probably phosphatidylinositol with a possible preference for the former. Also has a broad substrate specificity in terms of fatty acid moieties, hydrolyzing saturated and mono-unsaturated fatty acids at nearly equal rates from either the sn-1 or sn-2 position in diacyl phosphatidylcholine. However, has a weak activity toward polyunsaturated fatty acids at the sn-2 position, and thereby favors the production of 2-arachidonoyl lysophosphatidylcholine, a key branch point metabolite in eicosanoid signaling. On the other hand, can produce arachidonic acid from the sn-1 position of diacyl phospholipid and from the sn-2 position of arachidonate-containing plasmalogen substrates. Therefore, plays an important role in the mobilization of arachidonic acid in response to cellular stimuli and the generation of lipid second messengers. Can also hydrolyze lysophosphatidylcholine. In the mitochondrial compartment, catalyzes the hydrolysis and release of oxidized aliphatic chains from cardiolipin and integrates mitochondrial bioenergetics and signaling. It is essential for maintaining efficient bioenergetic mitochondrial function through tailoring mitochondrial membrane lipid metabolism and composition. This is Calcium-independent phospholipase A2-gamma from Mus musculus (Mouse).